A 553-amino-acid polypeptide reads, in one-letter code: MRKIEAKRGLDIECKGWEQEAVLRMLYNNLDPEVAERPEDLVVYGGIGKAARNWEAFEAIEDTLRSLEADETMLVQSGKPVAVFKTHEEAPRVLISNSVLVPEWANWDHFNELDKKGLMMYGQMTAGSWIYIGSQGIVQGTYETFGELANQHFNGKLNGTVTLTAGLGGMGGAQPLAVTMNGGVVIGVDVDETRIDKRIETRYCDVKTHDLDEALRLADEAREKGEPLSIGLVGNAVDTHKAILDKGFKIDIVTDQTSAHDPLNGYVPQGYSLEEAKAIRQKDPKQYVKEAQTSMRKHVELMLEFQKNGAVAFDYGNNIRQVAFNDGLENAFDFPGFVPAYIRPLFCEGKGPFRFAALSGNPKDIERADEEMRKIFPDNEKLIRWLDLAQEKIAFQGLPSRIAWLGYEERAKMGLALNKLVRDGEISAPIVIGRDHLDSGSVASPNRETEGMKDGSDAVGDWAILNALINTAAGGSWISFHHGGGVGMGYSLHAGMVVVADGSERADRRLGRVLTTDPGMGVVRHADAGYESAIKVAKEKGIKIPMITGKGDK.

NAD(+) is bound by residues 45–46, glutamine 123, 169–171, aspartate 189, arginine 194, 235–236, 256–260, 266–267, tyrosine 315, and glycine 485; these read GG, GMG, NA, QTSAH, and YV.

Belongs to the urocanase family. The cofactor is NAD(+).

It is found in the cytoplasm. The catalysed reaction is 4-imidazolone-5-propanoate = trans-urocanate + H2O. It functions in the pathway amino-acid degradation; L-histidine degradation into L-glutamate; N-formimidoyl-L-glutamate from L-histidine: step 2/3. In terms of biological role, catalyzes the conversion of urocanate to 4-imidazolone-5-propionate. The sequence is that of Urocanate hydratase from Staphylococcus saprophyticus subsp. saprophyticus (strain ATCC 15305 / DSM 20229 / NCIMB 8711 / NCTC 7292 / S-41).